The chain runs to 1780 residues: Protein TIC 214 (1780 aa).

Helical transmembrane passes span 19–39 (IINS…FSIG), 68–88 (FIAG…HLAL), 91–111 (PHTI…WNNN), 133–153 (VFLN…SSML), 176–196 (VGWL…LVWI), and 227–247 (IFSI…PSPI). Residues 251–275 (KLKGTSETEERGGTKQDQEVSTEEA) form a disordered region. The segment covering 254–268 (GTSETEERGGTKQDQ) has biased composition (basic and acidic residues).

It belongs to the TIC214 family. As to quaternary structure, part of the Tic complex.

The protein resides in the plastid. Its subcellular location is the chloroplast inner membrane. Involved in protein precursor import into chloroplasts. May be part of an intermediate translocation complex acting as a protein-conducting channel at the inner envelope. This chain is Protein TIC 214, found in Draba nemorosa (Woodland whitlowgrass).